Here is a 1226-residue protein sequence, read N- to C-terminus: AF4/FMR2 family member 3 (1226 aa).

Residues 24-37 (RNALRRKERERRNQ) are compositionally biased toward basic and acidic residues. Disordered stretches follow at residues 24-65 (RNAL…GDEL), 116-164 (SRAQ…RATQ), 197-299 (ERPP…GETN), 323-496 (KVEP…SNQY), and 523-728 (IKST…SINA). The segment covering 42–52 (DDGTFNSSYSL) has biased composition (polar residues). Residues 123–132 (SSICSTTTST) show a composition bias toward low complexity. Composition is skewed to polar residues over residues 251-261 (LKSSSETSVHC) and 334-344 (KDSQLVSSGHN). The segment covering 381–392 (QQAAQRTALRAL) has biased composition (low complexity). Polar residues predominate over residues 396 to 408 (AVVQQPNCRTSVP). The span at 409-445 (SSKGSSSSSSSGSSSSSSDSESSSGSDSETESSSSES) shows a compositional bias: low complexity. Residues 485–496 (QNESHGSESNQY) show a composition bias toward polar residues. Positions 523-533 (IKSTCKEEQRP) are enriched in basic and acidic residues. Composition is skewed to low complexity over residues 550–561 (PPAAVAVAVSAA) and 569–579 (CAPAENAPAPA). The span at 589–607 (RRTERTSAGDGANCHRPEE) shows a compositional bias: basic and acidic residues. Over residues 668 to 678 (TESSSSSSSSD) the composition is skewed to low complexity. Over residues 692-705 (KAQTVAASASSGND) the composition is skewed to polar residues. S755 bears the Phosphoserine mark. Disordered stretches follow at residues 783–856 (PQEP…LSAN), 879–964 (PISP…RDCK), and 1100–1138 (AAQA…SLSN). Basic and acidic residues predominate over residues 830 to 842 (REIKKSQGEKDSS). Residues 843 to 856 (SRLATSTSNTLSAN) are compositionally biased toward polar residues. Position 881 is a phosphoserine (S881). The segment covering 894-909 (EDLTSSSRPNGNSLFT) has biased composition (polar residues).

The protein belongs to the AF4 family. As to expression, preferentially expressed in lymphoid tissues, highest levels being found in the thymus.

It is found in the nucleus. Functionally, putative transcription activator that may function in lymphoid development and oncogenesis. Binds, in vitro, to double-stranded DNA. This is AF4/FMR2 family member 3 from Homo sapiens (Human).